A 379-amino-acid polypeptide reads, in one-letter code: Endonuclease III homolog 1, chloroplastic (379 aa).

The transit peptide at Met-1–Glu-54 directs the protein to the chloroplast. Residues Lys-244–His-272 form the HhH domain. The active-site Nucleophile; for N-glycosylase activity is Lys-265. 4 residues coordinate [4Fe-4S] cluster: Cys-340, Cys-347, Cys-350, and Cys-356.

Belongs to the Nth/MutY family. The cofactor is [4Fe-4S] cluster. Expressed at low levels in roots, stems, leaves and flowers.

The protein localises to the plastid. It is found in the chloroplast stroma. The protein resides in the chloroplast nucleoid. It catalyses the reaction 2'-deoxyribonucleotide-(2'-deoxyribose 5'-phosphate)-2'-deoxyribonucleotide-DNA = a 3'-end 2'-deoxyribonucleotide-(2,3-dehydro-2,3-deoxyribose 5'-phosphate)-DNA + a 5'-end 5'-phospho-2'-deoxyribonucleoside-DNA + H(+). In terms of biological role, bifunctional DNA N-glycosylase with associated apurinic/apyrimidinic (AP) lyase function that catalyzes the first step in base excision repair (BER), the primary repair pathway for the repair of oxidative DNA damage. The DNA N-glycosylase activity releases the damaged DNA base from DNA by cleaving the N-glycosidic bond, leaving an AP site. The AP lyase activity cleaves the phosphodiester bond 3' to the AP site by a beta-elimination. Primarily recognizes and repairs oxidative base damage of pyrimidines. In Arabidopsis thaliana (Mouse-ear cress), this protein is Endonuclease III homolog 1, chloroplastic.